Reading from the N-terminus, the 490-residue chain is Tektin-3 (490 aa).

O-linked (GalNAc...) threonine glycans are attached at residues Thr7 and Thr9. Residues Asn41, Asn86, Asn111, and Asn276 are each glycosylated (N-linked (GlcNAc...) asparagine). Residues 419–456 (RLVNEVYEVDETIQTLQQRLRDSEDTLQSLAHTKATLE) adopt a coiled-coil conformation.

This sequence belongs to the tektin family. Microtubule inner protein component of sperm flagellar doublet microtubules. Interacts with TEKT1, TEKT2, TEKT4 and TEKT5. Interacts with CCDC38. N- and O-glycosylated. Post-translationally, may be proteolytically processed during the epididymal transit of spermatozoa. In terms of processing, ubiquitinated, leading to its degradation. Deubiquitinated by USP16, promoting its stability. As to expression, expressed in epididymal sperm (at protein level).

Its subcellular location is the cytoplasm. It is found in the cytoskeleton. The protein localises to the cilium axoneme. The protein resides in the flagellum axoneme. It localises to the cytoplasmic vesicle. Its subcellular location is the secretory vesicle. It is found in the acrosome outer membrane. Microtubule inner protein (MIP) part of the dynein-decorated doublet microtubules (DMTs) in cilia and flagellar axoneme. Forms filamentous polymers in the walls of ciliary and flagellar microtubules. Required for normal sperm mobility. The sequence is that of Tektin-3 (Tekt3) from Rattus norvegicus (Rat).